A 372-amino-acid polypeptide reads, in one-letter code: Glutamate 5-kinase (372 aa).

Residue lysine 14 participates in ATP binding. Residues serine 54, aspartate 141, and asparagine 153 each contribute to the substrate site. 173-174 (TD) is a binding site for ATP. In terms of domain architecture, PUA spans 280 to 358 (RGRVIIDAGA…SEIESVLGHL (79 aa)).

Belongs to the glutamate 5-kinase family.

It localises to the cytoplasm. The catalysed reaction is L-glutamate + ATP = L-glutamyl 5-phosphate + ADP. Its pathway is amino-acid biosynthesis; L-proline biosynthesis; L-glutamate 5-semialdehyde from L-glutamate: step 1/2. Catalyzes the transfer of a phosphate group to glutamate to form L-glutamate 5-phosphate. This Cupriavidus metallidurans (strain ATCC 43123 / DSM 2839 / NBRC 102507 / CH34) (Ralstonia metallidurans) protein is Glutamate 5-kinase.